The following is a 202-amino-acid chain: MAETAASRTGSVSRKTNETSISVSVNLDGTGKSKISTGVGFFDHMLDQLSRHSLIDMEIESQGDLHIDDHHTVEDTGIAIGQAISKALGDRRGITRYASIDLAMDETMTKAAVDLSGRPFLVWNVAFSAPKIGTFDTELVREFFQALAQNAGITLHILNHYGANNHHIAETCFKAVARALRTATEIDPRQVGRVPSTKGTLV.

The protein belongs to the imidazoleglycerol-phosphate dehydratase family.

It localises to the cytoplasm. The enzyme catalyses D-erythro-1-(imidazol-4-yl)glycerol 3-phosphate = 3-(imidazol-4-yl)-2-oxopropyl phosphate + H2O. It participates in amino-acid biosynthesis; L-histidine biosynthesis; L-histidine from 5-phospho-alpha-D-ribose 1-diphosphate: step 6/9. This Rhizobium leguminosarum bv. trifolii (strain WSM2304) protein is Imidazoleglycerol-phosphate dehydratase.